A 156-amino-acid polypeptide reads, in one-letter code: Small ribosomal subunit protein uS7 (156 aa).

Belongs to the universal ribosomal protein uS7 family. In terms of assembly, part of the 30S ribosomal subunit. Contacts proteins S9 and S11.

Its function is as follows. One of the primary rRNA binding proteins, it binds directly to 16S rRNA where it nucleates assembly of the head domain of the 30S subunit. Is located at the subunit interface close to the decoding center, probably blocks exit of the E-site tRNA. In Buchnera aphidicola subsp. Acyrthosiphon pisum (strain Tuc7), this protein is Small ribosomal subunit protein uS7.